The following is a 196-amino-acid chain: MIPVVIEQTSRGERSYDIYSRLLKDRIIMLTGPVEDNMANSVIAQLLFLDAQDSTKDIYLYVNTPGGSVSAGLAIVDTMNFIKADVQTIVMGMAASMGTVIASSGAKGKRFMLPNAEYMIHQPMGGTGGGTQQTDMAIAAEHLLKTRNTLEKILAENSGQSMEKVHADAERDNWMSAQETLEYGFIDEIMANNSLN.

The active-site Nucleophile is serine 96. Residue histidine 121 is part of the active site.

It belongs to the peptidase S14 family. As to quaternary structure, fourteen ClpP subunits assemble into 2 heptameric rings which stack back to back to give a disk-like structure with a central cavity, resembling the structure of eukaryotic proteasomes.

The protein resides in the cytoplasm. It carries out the reaction Hydrolysis of proteins to small peptides in the presence of ATP and magnesium. alpha-casein is the usual test substrate. In the absence of ATP, only oligopeptides shorter than five residues are hydrolyzed (such as succinyl-Leu-Tyr-|-NHMec, and Leu-Tyr-Leu-|-Tyr-Trp, in which cleavage of the -Tyr-|-Leu- and -Tyr-|-Trp bonds also occurs).. Cleaves peptides in various proteins in a process that requires ATP hydrolysis. Has a chymotrypsin-like activity. Plays a major role in the degradation of misfolded proteins. In Streptococcus pneumoniae (strain ATCC 700669 / Spain 23F-1), this protein is ATP-dependent Clp protease proteolytic subunit.